Here is a 77-residue protein sequence, read N- to C-terminus: UPF0291 protein EAT1b_0405 (77 aa).

Residues 53–77 (KVVDPDGNDVTPEKLKEDQKRYRGE) are disordered. A compositionally biased stretch (basic and acidic residues) spans 63-77 (TPEKLKEDQKRYRGE).

It belongs to the UPF0291 family.

Its subcellular location is the cytoplasm. This is UPF0291 protein EAT1b_0405 from Exiguobacterium sp. (strain ATCC BAA-1283 / AT1b).